We begin with the raw amino-acid sequence, 44 residues long: Phosphatase RapA inhibitor (44 aa).

A propeptide spanning residues 1 to 39 (MKSKWMSGLLLVAVGFSFTQVMVHAGETANTEGKTFHIA) is cleaved from the precursor.

The protein belongs to the Phr family. In terms of assembly, interacts with RapA and inhibits its interaction with Spo0F. Post-translationally, secreted with a propeptide domain, which is cleaved in the cell wall by the secreted serine proteases subtilisin and Vpr to produce a mature signaling peptide. Contains a predicted signal peptide cleavage site in the N-terminal region, however the propeptide is probably subject to only one processing event, at the N-terminal end of the mature peptide.

The protein localises to the secreted. It localises to the cytoplasm. Inhibition of RapA requires a free carboxylate group at the C-terminal end of the PhrA pentapeptide. A free C-terminal carboxylic acid PhrA pentapeptide inhibits RapA phosphatase activity at a 1:1 ratio and is approximately 200 fold more active than a C-terminal amide peptide. Its function is as follows. Signaling molecule involved in the regulation of sporulation. Secreted during production, but the mature peptide acts intracellularly, indicating that it needs to be imported into the cell to function. Inhibitor of the RapA phosphatase activity. Does not act on RapB. In Bacillus subtilis (strain 168), this protein is Phosphatase RapA inhibitor.